The following is a 468-amino-acid chain: Maltose fermentation regulatory protein MAL33 (468 aa).

Residues 8 to 34 (CDYCRVRRVKCDGKKPCSRCIEHNFDC) constitute a DNA-binding region (zn(2)-C6 fungal-type). The Nuclear localization signal motif lies at 41–49 (KKRGSKPIG).

This sequence belongs to the MAL13 family.

It localises to the nucleus. In terms of biological role, regulates the coordinate transcription of structural MAL3S (maltase) and MAL3T (maltose permease) genes. This chain is Maltose fermentation regulatory protein MAL33 (MAL33), found in Saccharomyces cerevisiae (strain ATCC 204508 / S288c) (Baker's yeast).